A 390-amino-acid polypeptide reads, in one-letter code: Magnesium-protoporphyrin IX monomethyl ester [oxidative] cyclase (390 aa).

Positions 1–20 are disordered; sequence MSQSTIESTNKKEINKGKAP.

It belongs to the AcsF family. It depends on Fe cation as a cofactor.

The catalysed reaction is Mg-protoporphyrin IX 13-monomethyl ester + 3 NADPH + 3 O2 + 2 H(+) = 3,8-divinyl protochlorophyllide a + 3 NADP(+) + 5 H2O. It participates in porphyrin-containing compound metabolism; chlorophyll biosynthesis (light-independent). Its function is as follows. Catalyzes the formation of the isocyclic ring in chlorophyll biosynthesis. Mediates the cyclase reaction, which results in the formation of divinylprotochlorophyllide (Pchlide) characteristic of all chlorophylls from magnesium-protoporphyrin IX 13-monomethyl ester (MgPMME). This Prochlorococcus marinus (strain MIT 9301) protein is Magnesium-protoporphyrin IX monomethyl ester [oxidative] cyclase.